Here is a 545-residue protein sequence, read N- to C-terminus: Thermosome subunit alpha (545 aa).

Residues 522–545 form a disordered region; that stretch reads KKSTPPSGQGGQGQGMPGGGMPEY. Gly residues predominate over residues 529–545; sequence GQGGQGQGMPGGGMPEY.

Belongs to the TCP-1 chaperonin family. As to quaternary structure, forms a Heterooligomeric complex of two stacked eight-membered rings. Post-translationally, the N-terminus is blocked.

Its function is as follows. Molecular chaperone; binds unfolded polypeptides in vitro, and has a weak ATPase activity. This is Thermosome subunit alpha (thsA) from Thermoplasma acidophilum (strain ATCC 25905 / DSM 1728 / JCM 9062 / NBRC 15155 / AMRC-C165).